The chain runs to 313 residues: 4-diphosphocytidyl-2-C-methyl-D-erythritol kinase (313 aa).

Lys10 is an active-site residue. Residue 95–105 (PVTAGLGGGSS) participates in ATP binding. The active site involves Asp136. The disordered stretch occupies residues 289–313 (HPRVSPWRSPRSASSPSTRRSSRPT). Residues 292–307 (VSPWRSPRSASSPSTR) show a composition bias toward low complexity.

Belongs to the GHMP kinase family. IspE subfamily.

It catalyses the reaction 4-CDP-2-C-methyl-D-erythritol + ATP = 4-CDP-2-C-methyl-D-erythritol 2-phosphate + ADP + H(+). The protein operates within isoprenoid biosynthesis; isopentenyl diphosphate biosynthesis via DXP pathway; isopentenyl diphosphate from 1-deoxy-D-xylulose 5-phosphate: step 3/6. In terms of biological role, catalyzes the phosphorylation of the position 2 hydroxy group of 4-diphosphocytidyl-2C-methyl-D-erythritol. The sequence is that of 4-diphosphocytidyl-2-C-methyl-D-erythritol kinase from Anaeromyxobacter dehalogenans (strain 2CP-C).